Reading from the N-terminus, the 269-residue chain is HTH-type transcriptional activator ArnR1 (269 aa).

Residues M1–Y217 lie on the Cytoplasmic side of the membrane. The segment at residues T42 to D65 is a DNA-binding region (H-T-H motif). The chain crosses the membrane as a helical span at residues E218–L238. Topologically, residues K239–Q241 are extracellular. Residues L242 to F262 form a helical membrane-spanning segment. Residues A263–I269 are Cytoplasmic-facing.

It is found in the cell membrane. In terms of biological role, involved in regulation of archaellar gene expression. May activate flaB transcription upon nutrient starvation by acting on the flaB promoter. The sequence is that of HTH-type transcriptional activator ArnR1 from Sulfolobus acidocaldarius (strain ATCC 33909 / DSM 639 / JCM 8929 / NBRC 15157 / NCIMB 11770).